The sequence spans 319 residues: NADH-ubiquinone oxidoreductase chain 1 (319 aa).

The next 8 membrane-spanning stretches (helical) occupy residues 5-25, 72-92, 102-122, 146-166, 173-193, 225-245, 254-274, and 295-315; these read TINS…LTLM, LLIS…TPIP, LGLL…LWAG, VTLG…TMQL, FTWL…STLA, FFLT…ILFI, ELFL…FLWI, and LPLT…TSGI.

Belongs to the complex I subunit 1 family.

The protein resides in the mitochondrion inner membrane. The catalysed reaction is a ubiquinone + NADH + 5 H(+)(in) = a ubiquinol + NAD(+) + 4 H(+)(out). Functionally, core subunit of the mitochondrial membrane respiratory chain NADH dehydrogenase (Complex I) that is believed to belong to the minimal assembly required for catalysis. Complex I functions in the transfer of electrons from NADH to the respiratory chain. The immediate electron acceptor for the enzyme is believed to be ubiquinone. This chain is NADH-ubiquinone oxidoreductase chain 1 (MT-ND1), found in Varanus flavescens (Yellow monitor).